We begin with the raw amino-acid sequence, 427 residues long: Phosphatase PSR1 (427 aa).

Residues Cys9 and Cys10 are each lipidated (S-palmitoyl cysteine). Polar residues predominate over residues 14 to 34 (TTQSNSNSAYRQQQSSSLNKN). The segment at 14–223 (TTQSNSNSAY…SNDADDEDDE (210 aa)) is disordered. Over residues 35–48 (RSVKHSNTKSRTRG) the composition is skewed to basic residues. Positions 49–80 (VHQTNSPPSKTNSAATFSSTERSTGKSGISTN) are enriched in polar residues. The segment covering 104 to 118 (KVEKRISKDDLYEEK) has biased composition (basic and acidic residues). Ser110 carries the phosphoserine modification. Acidic residues predominate over residues 119–130 (YEVDEDEEIDDE). Basic and acidic residues predominate over residues 131–151 (DNRRSRGIVQEKGDAVKDTSR). Lys154 is covalently cross-linked (Glycyl lysine isopeptide (Lys-Gly) (interchain with G-Cter in ubiquitin)). Low complexity predominate over residues 155–183 (QQQQQQQQSQPQPQPQSQSQSQSQSQSQQ). Positions 184 to 214 (RGPTVQVSSDHLIQDMNLSRVSSSSQASETS) are enriched in polar residues. The 159-residue stretch at 253–411 (STKGKKCLIL…LDIIPLLEDL (159 aa)) folds into the FCP1 homology domain.

In terms of assembly, interacts with WHI2.

It localises to the cell membrane. In terms of biological role, has phosphatase activity in vitro. Involved in the response to sodium and lithium ion stress (but not to potassium or sorbitol stress) by inducing transcription of the sodium pump ENA1/PMR2. Acts through a calcineurin-independent pathway and is functionally redundant with PSR2. Also involved in the general stress response; acts together with WHI2 to activate stress response element (STRE)-mediated gene expression, possibly through dephosphorylation of MSN2. The polypeptide is Phosphatase PSR1 (PSR1) (Saccharomyces cerevisiae (strain ATCC 204508 / S288c) (Baker's yeast)).